The sequence spans 444 residues: Chitinase-like protein Idgf4 (444 aa).

The N-terminal stretch at methionine 1–alanine 22 is a signal peptide. The 418-residue stretch at asparagine 27–glutamine 444 folds into the GH18 domain. The cysteines at positions 31 and 58 are disulfide-linked. The N-linked (GlcNAc...) asparagine glycan is linked to asparagine 226. Cysteine 345 and cysteine 428 are oxidised to a cystine.

Belongs to the glycosyl hydrolase 18 family. IDGF subfamily. In terms of processing, glycosylated.

The protein resides in the secreted. Cooperates with insulin-like peptides to stimulate the proliferation, polarization and motility of imaginal disk cells. May act by stabilizing the binding of insulin-like peptides to its receptor through a simultaneous interaction with both molecules to form a multiprotein signaling complex. The protein is Chitinase-like protein Idgf4 (Idgf4) of Glossina morsitans morsitans (Savannah tsetse fly).